The chain runs to 242 residues: NADPH-dependent pterin aldehyde reductase (242 aa).

The residue at position 2 (Thr2) is an N-acetylthreonine. An NADP(+)-binding site is contributed by 21-50 (LITGVSKGLGRALALELAKRGHTVIGCARS). Ser153 contributes to the substrate binding site. Tyr166 serves as the catalytic Proton acceptor. Lys170 lines the NADP(+) pocket.

The protein belongs to the short-chain dehydrogenases/reductases (SDR) family. Homodimer. Mostly expressed in seeds, and, to a lower extent, in roots, leaves, flowers and siliques.

The protein localises to the cytoplasm. Functionally, NADPH-dependent pterin aldehyde reductase involved in pterin aldehyde salvage during folate turnover. Catalyzes the reduction of diverse aromatic and aliphatic aldehydes (e.g. acetaldehyde, n-propanal, 1-naphthaldehyde, benzaldehyde, cinnamaldehyde, n-butanal, n-hexanal, n-pentanal, 2-naphthaldehyde, n-octanal, n-nonanal and n-heptanal), in addition to the conversion of pterin-6-aldehyde (PtCHO) to 6-hydroxymethylpterin (PtCH(2)OH), and the conversion of dihydropterin-6-aldehyde (H(2)PtCHO) to 6-hydroxymethyldihydropterin (H(2)PtCH(2)OH). Cannot reduce the pterin ring. In Arabidopsis thaliana (Mouse-ear cress), this protein is NADPH-dependent pterin aldehyde reductase.